Consider the following 1798-residue polypeptide: DNA polymerase II large subunit (1798 aa).

The disordered stretch occupies residues 286–309; it reads EKGKSSEENKDESKAEDTGTESVA. The DOD-type homing endonuclease domain maps to 1184 to 1319; the sequence is VVGYYLAEGY…ETLLLAKFGI (136 aa). Residues 1699–1798 form a disordered region; the sequence is TGHSNGKNGY…GISLDEFFGS (100 aa). Residues 1714–1731 show a composition bias toward low complexity; it reads GKNGKASKKSGSLASKLS. The segment covering 1733–1753 has biased composition (basic and acidic residues); the sequence is KGKEPSKKKESAKPKRSEKVK.

The protein belongs to the archaeal DNA polymerase II family. As to quaternary structure, heterodimer of a large subunit and a small subunit. In terms of processing, this protein undergoes a protein self splicing that involves a post-translational excision of the intervening region (intein) followed by peptide ligation.

The catalysed reaction is DNA(n) + a 2'-deoxyribonucleoside 5'-triphosphate = DNA(n+1) + diphosphate. It catalyses the reaction Exonucleolytic cleavage in the 3'- to 5'-direction to yield nucleoside 5'-phosphates.. Possesses two activities: a DNA synthesis (polymerase) and an exonucleolytic activity that degrades single-stranded DNA in the 3'- to 5'-direction. Has a template-primer preference which is characteristic of a replicative DNA polymerase. This Thermococcus kodakarensis (strain ATCC BAA-918 / JCM 12380 / KOD1) (Pyrococcus kodakaraensis (strain KOD1)) protein is DNA polymerase II large subunit (polC).